A 186-amino-acid chain; its full sequence is Probable RNA 2'-phosphotransferase (186 aa).

This sequence belongs to the KptA/TPT1 family.

Functionally, removes the 2'-phosphate from RNA via an intermediate in which the phosphate is ADP-ribosylated by NAD followed by a presumed transesterification to release the RNA and generate ADP-ribose 1''-2''-cyclic phosphate (APPR&gt;P). May function as an ADP-ribosylase. This Agrobacterium fabrum (strain C58 / ATCC 33970) (Agrobacterium tumefaciens (strain C58)) protein is Probable RNA 2'-phosphotransferase.